We begin with the raw amino-acid sequence, 101 residues long: Urease subunit beta (101 aa).

The protein belongs to the urease beta subunit family. In terms of assembly, heterotrimer of UreA (gamma), UreB (beta) and UreC (alpha) subunits. Three heterotrimers associate to form the active enzyme.

It is found in the cytoplasm. It catalyses the reaction urea + 2 H2O + H(+) = hydrogencarbonate + 2 NH4(+). It participates in nitrogen metabolism; urea degradation; CO(2) and NH(3) from urea (urease route): step 1/1. This Paraburkholderia xenovorans (strain LB400) protein is Urease subunit beta.